We begin with the raw amino-acid sequence, 417 residues long: Alpha-galactosidase (417 aa).

An N-terminal signal peptide occupies residues Met1 to Ala55. Residues Trp71, Asp106, Asp107, Cys156, Lys183, Asp185, Trp219, Arg236, and Asp240 each coordinate alpha-D-galactose. Cystine bridges form between Cys76–Cys108 and Cys156–Cys187. Residue Asp185 is the Nucleophile of the active site. Catalysis depends on Asp240, which acts as the Proton donor.

Belongs to the glycosyl hydrolase 27 family.

The enzyme catalyses Hydrolysis of terminal, non-reducing alpha-D-galactose residues in alpha-D-galactosides, including galactose oligosaccharides, galactomannans and galactolipids.. It catalyses the reaction melibiose + H2O = D-galactose + D-glucose. The catalysed reaction is raffinose + H2O = sucrose + D-galactose. It carries out the reaction stachyose + H2O = raffinose + D-galactose. The enzyme catalyses alpha-D-Gal-(1-&gt;6)-beta-D-Man-(1-&gt;4)-beta-D-Man-(1-&gt;4)-D-Man + H2O = beta-D-Man-(1-&gt;4)-beta-D-Man-(1-&gt;4)-D-Man + D-galactose. It catalyses the reaction beta-D-Man-(1-&gt;4)-[alpha-D-Gal-(1-&gt;6)]-beta-D-Man-(1-&gt;4)-beta-D-Man-(1-&gt;4)-D-Man + H2O = beta-D-Man-(1-&gt;4)-beta-D-Man-(1-&gt;4)-beta-D-Man-(1-&gt;4)-D-Man + D-galactose. 1 mM Hg(2+) and Ag(2+) decrease activity by 98% and 96%, respectively. 1 mM Para-chloromercuribenzoic acid (PCMB) completely inhibits enzymatic activity. Its function is as follows. Hydrolyzes melibiose, raffinose and stachyose in the following decreasing order of reactivity: raffinose, melibiose, stachyose. Acts on both the terminal alpha-galactosyl residue and the side-chain alpha-galactosyl residue of the galactomanno-oligosaccharides. The polypeptide is Alpha-galactosidase (Oryza sativa subsp. japonica (Rice)).